A 477-amino-acid chain; its full sequence is Probable periplasmic serine endoprotease DegP-like (477 aa).

Residues 1–27 (MSIPRLKSYLTMFAAVLMLGQVLTAQA) form the signal peptide. Catalysis depends on charge relay system residues His-117, Asp-147, and Ser-220. Residues 218–220 (GNS) and 275–279 (LGVVI) contribute to the substrate site. 2 consecutive PDZ domains span residues 264-355 (LKKD…IRNG) and 361-466 (DISV…LRQG).

The protein belongs to the peptidase S1C family.

It is found in the periplasm. The catalysed reaction is Acts on substrates that are at least partially unfolded. The cleavage site P1 residue is normally between a pair of hydrophobic residues, such as Val-|-Val.. In terms of biological role, might be efficient in the degradation of transiently denatured and unfolded proteins which accumulate in the periplasm following stress conditions. This Pseudomonas putida (strain GB-1) protein is Probable periplasmic serine endoprotease DegP-like.